A 359-amino-acid chain; its full sequence is uncharacterized protein (359 aa).

This is an uncharacterized protein from Archaeoglobus fulgidus (strain ATCC 49558 / DSM 4304 / JCM 9628 / NBRC 100126 / VC-16).